Reading from the N-terminus, the 1620-residue chain is Putative zinc carboxypeptidase (1620 aa).

Topologically, residues Met-1–Asn-1367 are extracellular. Residue Asn-19 is glycosylated (N-linked (GlcNAc...) asparagine). The tract at residues Arg-32–Lys-74 is disordered. A compositionally biased stretch (basic and acidic residues) spans Asn-33–Asn-43. Positions Lys-44 to Asp-55 are enriched in acidic residues. 2 N-linked (GlcNAc...) asparagine glycosylation sites follow: Asn-56 and Asn-102. The disordered stretch occupies residues Gly-309 to Glu-328. Residues Asn-354, Asn-487, Asn-508, Asn-529, Asn-550, Asn-571, Asn-589, Asn-687, Asn-802, and Asn-1010 are each glycosylated (N-linked (GlcNAc...) asparagine). The possible malaria epitope stretch occupies residues Val-497–Ile-559. In terms of domain architecture, Peptidase M14 spans Gly-1004 to Tyr-1261. The Zn(2+) site is built by His-1059 and Glu-1062. 2 N-linked (GlcNAc...) asparagine glycosylation sites follow: Asn-1064 and Asn-1141. His-1155 lines the Zn(2+) pocket. Glu-1229 serves as the catalytic Proton donor/acceptor. A disordered region spans residues Asn-1279–His-1329. The chain crosses the membrane as a helical span at residues Leu-1368–Ser-1388. The Cytoplasmic portion of the chain corresponds to Tyr-1389 to Leu-1620. Residues Pro-1560–Leu-1620 form a disordered region. Basic and acidic residues predominate over residues Asn-1581 to Ser-1597. A compositionally biased stretch (basic residues) spans Lys-1598–Leu-1620.

Belongs to the peptidase M14 family. Zn(2+) is required as a cofactor.

Its subcellular location is the membrane. This is Putative zinc carboxypeptidase from Plasmodium falciparum (isolate 3D7).